Consider the following 159-residue polypeptide: RNA pyrophosphohydrolase (159 aa).

One can recognise a Nudix hydrolase domain in the interval 6 to 149; it reads GFRPNVGIIL…KREVYRRALK (144 aa). The Nudix box motif lies at 38 to 59; it reads GGINPQETPEDALYRELNEEVG.

Belongs to the Nudix hydrolase family. RppH subfamily. The cofactor is a divalent metal cation.

Its function is as follows. Accelerates the degradation of transcripts by removing pyrophosphate from the 5'-end of triphosphorylated RNA, leading to a more labile monophosphorylated state that can stimulate subsequent ribonuclease cleavage. In Pseudomonas savastanoi pv. phaseolicola (strain 1448A / Race 6) (Pseudomonas syringae pv. phaseolicola (strain 1448A / Race 6)), this protein is RNA pyrophosphohydrolase.